Here is a 1088-residue protein sequence, read N- to C-terminus: RNA-directed RNA polymerase (1088 aa).

Positions 501–687 (LSYGDVTRFL…AKRYIAGGKI (187 aa)) constitute a RdRp catalytic domain.

This sequence belongs to the reoviridae RNA-directed RNA polymerase family. In terms of assembly, interacts with VP3 (Potential). Interacts with VP2; this interaction activates VP1. Interacts with NSP5; this interaction is probably necessary for the formation of functional virus factories. Interacts with NSP2; this interaction is weak. Mg(2+) serves as cofactor.

It is found in the virion. It catalyses the reaction RNA(n) + a ribonucleoside 5'-triphosphate = RNA(n+1) + diphosphate. Functionally, RNA-directed RNA polymerase that is involved in both transcription and genome replication. Together with VP3 capping enzyme, forms an enzyme complex positioned near the channels situated at each of the five-fold vertices of the core. Following infection, the outermost layer of the virus is lost, leaving a double-layered particle (DLP) made up of the core and VP6 shell. VP1 then catalyzes the transcription of fully conservative plus-strand genomic RNAs that are extruded through the DLP's channels into the cytoplasm where they function as mRNAs for translation of viral proteins. One copy of each of the viral (+)RNAs is also recruited during core assembly, together with newly synthesized polymerase complexes and VP2. The polymerase of these novo-formed particles catalyzes the synthesis of complementary minus-strands leading to dsRNA formation. To do so, the polymerase specifically recognizes and binds 4 bases 5'-UGUG-3' in the conserved 3'-sequence of plus-strand RNA templates. VP2 presumably activates the autoinhibited VP1-RNA complex to coordinate packaging and genome replication. Once dsRNA synthesis is complete, the polymerase switches to the transcriptional mode, thus providing secondary transcription. The chain is RNA-directed RNA polymerase from Homo sapiens (Human).